The chain runs to 283 residues: Phospholipase C (283 aa).

The N-terminal stretch at 1-24 is a signal peptide; it reads MKKKVLALGAAITLVAPLQSVAFA. Residues 25–38 constitute a propeptide that is removed on maturation; that stretch reads HENDGGQRFGVIPR. Zn(2+) is bound by residues tryptophan 39, histidine 52, aspartate 93, histidine 107, histidine 156, aspartate 160, histidine 166, histidine 180, and glutamate 184. The Zn-dependent PLC domain maps to 39–283; the sequence is WSAEDKHKEG…QLWFDTYGNR (245 aa).

The protein belongs to the bacterial zinc-metallophospholipase C family. In terms of assembly, monomer. Zn(2+) is required as a cofactor.

It carries out the reaction a 1,2-diacyl-sn-glycero-3-phosphocholine + H2O = phosphocholine + a 1,2-diacyl-sn-glycerol + H(+). Functionally, required, with sphingomyelinase, to effect target cell lysis (hemolysis). The sequence is that of Phospholipase C (cerA) from Bacillus cereus.